The chain runs to 450 residues: Glucose-6-phosphate isomerase (450 aa).

The active-site Proton donor is E291. Active-site residues include H312 and K426.

The protein belongs to the GPI family.

It localises to the cytoplasm. The enzyme catalyses alpha-D-glucose 6-phosphate = beta-D-fructose 6-phosphate. It participates in carbohydrate biosynthesis; gluconeogenesis. The protein operates within carbohydrate degradation; glycolysis; D-glyceraldehyde 3-phosphate and glycerone phosphate from D-glucose: step 2/4. Catalyzes the reversible isomerization of glucose-6-phosphate to fructose-6-phosphate. This is Glucose-6-phosphate isomerase from Clostridium botulinum (strain Langeland / NCTC 10281 / Type F).